We begin with the raw amino-acid sequence, 478 residues long: MLYEKFEYNINNLIGNFGLSKISIAVSGGSDSVALLYLANIWAEKNNIELFVISVDHNLREQSKQETHYIQNISNSLNRKHYSLSFDHQNNFSNLQERAREGRYDLMTNLCLELDILVLLTAHHEDDYVENFCLRLERNSGIFGLSSSNINWYNNIQIIRPLYNIPKSELVEYLVRHNIKWFEDESNSSDKYRRNVIRQKLAKGADYIRHFSKPVYREEFKGDTERSTAAYTLVREDASTGTASKLSLEAKCGKMSKAAIISQQLKTNKLIENEFKPELISAIAEAVKIFEYGFAFLDLVKFDKFSNEVKVQIINFLLIIISGQSRAARFYSVEPILKLITQDVNFKNTLHGCIIKRIQNELLIYREFGKKLPESKILLDKSVIWDNRFCITKNQETPNCFVTHLSLKDYKIIKKQLDLEPLKNLSCKNHNAVLLTLPIIKILEKVIAIPHISYYDNDMWNFEVSFSPNFVSRFTHFC.

Position 27 to 32 (Ser-27 to Ser-32) interacts with ATP.

This sequence belongs to the tRNA(Ile)-lysidine synthase family.

The protein resides in the cytoplasm. It catalyses the reaction cytidine(34) in tRNA(Ile2) + L-lysine + ATP = lysidine(34) in tRNA(Ile2) + AMP + diphosphate + H(+). Functionally, ligates lysine onto the cytidine present at position 34 of the AUA codon-specific tRNA(Ile) that contains the anticodon CAU, in an ATP-dependent manner. Cytidine is converted to lysidine, thus changing the amino acid specificity of the tRNA from methionine to isoleucine. This Rickettsia conorii (strain ATCC VR-613 / Malish 7) protein is tRNA(Ile)-lysidine synthase.